Here is a 238-residue protein sequence, read N- to C-terminus: 2-C-methyl-D-erythritol 4-phosphate cytidylyltransferase (238 aa).

The protein belongs to the IspD/TarI cytidylyltransferase family. IspD subfamily.

It catalyses the reaction 2-C-methyl-D-erythritol 4-phosphate + CTP + H(+) = 4-CDP-2-C-methyl-D-erythritol + diphosphate. The protein operates within isoprenoid biosynthesis; isopentenyl diphosphate biosynthesis via DXP pathway; isopentenyl diphosphate from 1-deoxy-D-xylulose 5-phosphate: step 2/6. In terms of biological role, catalyzes the formation of 4-diphosphocytidyl-2-C-methyl-D-erythritol from CTP and 2-C-methyl-D-erythritol 4-phosphate (MEP). This chain is 2-C-methyl-D-erythritol 4-phosphate cytidylyltransferase, found in Leptospira interrogans serogroup Icterohaemorrhagiae serovar copenhageni (strain Fiocruz L1-130).